The following is a 414-amino-acid chain: Cytochrome b (414 aa).

2 consecutive transmembrane segments (helical) span residues 40–60 (FFGS…VWLA) and 84–104 (GWLI…VIYL). Heme b contacts are provided by His91 and His105. 8 helical membrane-spanning segments follow: residues 121–141 (LLWM…FFGY), 154–174 (QVIV…SVWV), 188–208 (FFAF…LHIV), 252–272 (LMGV…NPTM), 294–314 (IAPV…PPMY), 317–337 (QFPG…LPWL), 351–371 (IFKW…WLGI), and 378–398 (YTLL…LMPI). The heme b site is built by His192 and His206.

Belongs to the cytochrome b family. As to quaternary structure, the main subunits of complex b-c1 are: cytochrome b, cytochrome c1 and the Rieske protein. Requires heme b as cofactor.

It is found in the cell membrane. Its function is as follows. Component of the ubiquinol-cytochrome c reductase complex (complex III or cytochrome b-c1 complex), which is a respiratory chain that generates an electrochemical potential coupled to ATP synthesis. The sequence is that of Cytochrome b (petB) from Allochromatium vinosum (strain ATCC 17899 / DSM 180 / NBRC 103801 / NCIMB 10441 / D) (Chromatium vinosum).